Consider the following 168-residue polypeptide: MVRLLGIDPGLRFTGWGLVDVDGNRLCHVADGVIATDGDAPVPERLRCLHDSLLDLVRRYGPREAAVEETYVNRNGASTLKLGYARGVALLVPALAGIAVSEYGAMAVKRAVVGTGAASKDQVEMMVRRLLPGATIRRADASDALAVAICHAHHRASALRVSAGTRMA.

Catalysis depends on residues aspartate 8, glutamate 68, and aspartate 140. Mg(2+)-binding residues include aspartate 8, glutamate 68, and aspartate 140.

It belongs to the RuvC family. In terms of assembly, homodimer which binds Holliday junction (HJ) DNA. The HJ becomes 2-fold symmetrical on binding to RuvC with unstacked arms; it has a different conformation from HJ DNA in complex with RuvA. In the full resolvosome a probable DNA-RuvA(4)-RuvB(12)-RuvC(2) complex forms which resolves the HJ. It depends on Mg(2+) as a cofactor.

Its subcellular location is the cytoplasm. The catalysed reaction is Endonucleolytic cleavage at a junction such as a reciprocal single-stranded crossover between two homologous DNA duplexes (Holliday junction).. In terms of biological role, the RuvA-RuvB-RuvC complex processes Holliday junction (HJ) DNA during genetic recombination and DNA repair. Endonuclease that resolves HJ intermediates. Cleaves cruciform DNA by making single-stranded nicks across the HJ at symmetrical positions within the homologous arms, yielding a 5'-phosphate and a 3'-hydroxyl group; requires a central core of homology in the junction. The consensus cleavage sequence is 5'-(A/T)TT(C/G)-3'. Cleavage occurs on the 3'-side of the TT dinucleotide at the point of strand exchange. HJ branch migration catalyzed by RuvA-RuvB allows RuvC to scan DNA until it finds its consensus sequence, where it cleaves and resolves the cruciform DNA. The protein is Crossover junction endodeoxyribonuclease RuvC of Gluconacetobacter diazotrophicus (strain ATCC 49037 / DSM 5601 / CCUG 37298 / CIP 103539 / LMG 7603 / PAl5).